The chain runs to 188 residues: Threonylcarbamoyl-AMP synthase (188 aa).

The 186-residue stretch at 3–188 (QLHPSDIKDI…RSGKILRNGQ (186 aa)) folds into the YrdC-like domain.

It belongs to the SUA5 family. TsaC subfamily.

It is found in the cytoplasm. The enzyme catalyses L-threonine + hydrogencarbonate + ATP = L-threonylcarbamoyladenylate + diphosphate + H2O. Functionally, required for the formation of a threonylcarbamoyl group on adenosine at position 37 (t(6)A37) in tRNAs that read codons beginning with adenine. Catalyzes the conversion of L-threonine, HCO(3)(-)/CO(2) and ATP to give threonylcarbamoyl-AMP (TC-AMP) as the acyladenylate intermediate, with the release of diphosphate. This chain is Threonylcarbamoyl-AMP synthase, found in Shewanella putrefaciens (strain CN-32 / ATCC BAA-453).